The primary structure comprises 201 residues: Large ribosomal subunit protein uL4 (201 aa).

A disordered region spans residues 43 to 71; that stretch reads TRAQKTRSDVSGGGKKPWRQKGTGRARSG.

The protein belongs to the universal ribosomal protein uL4 family. As to quaternary structure, part of the 50S ribosomal subunit.

In terms of biological role, one of the primary rRNA binding proteins, this protein initially binds near the 5'-end of the 23S rRNA. It is important during the early stages of 50S assembly. It makes multiple contacts with different domains of the 23S rRNA in the assembled 50S subunit and ribosome. Its function is as follows. Forms part of the polypeptide exit tunnel. In Psychromonas ingrahamii (strain DSM 17664 / CCUG 51855 / 37), this protein is Large ribosomal subunit protein uL4.